We begin with the raw amino-acid sequence, 272 residues long: Insertion element IS600 uncharacterized 31 kDa protein (272 aa).

The Integrase catalytic domain occupies 105–268 (APTAPNQVWV…SPAAFREKYH (164 aa)).

The sequence is that of Insertion element IS600 uncharacterized 31 kDa protein from Shigella sonnei.